Here is a 2310-residue protein sequence, read N- to C-terminus: Retinal-specific phospholipid-transporting ATPase ABCA4 (2310 aa).

The Cytoplasmic portion of the chain corresponds to 1-21 (MGFLRQIQLLLWKNWTLRKRQ). A helical membrane pass occupies residues 22–42 (KIRFVVELVWPLSLFLVLIWL). The Extracellular segment spans residues 43-646 (RNANPLYSQH…MPYPCFVDDS (604 aa)). 2 cysteine pairs are disulfide-bonded: Cys-54–Cys-81 and Cys-75–Cys-324. Asn-98 carries N-linked (GlcNAc...) asparagine glycosylation. Residues Ser-336 and Asn-338 each coordinate Mg(2+). A disulfide bridge links Cys-370 with Cys-519. Residues Asn-415 and Asn-504 are each glycosylated (N-linked (GlcNAc...) asparagine). An N-all-trans-retinylidenephosphatidylethanolamine-binding residues include Arg-587 and Arg-653. 3 disulfides stabilise this stretch: Cys-641–Cys-1489, Cys-1443–Cys-1454, and Cys-1487–Cys-1501. The helical transmembrane segment at 647-667 (FMIILNRCFPIFMVLAWIYSV) threads the bilayer. At 668 to 699 (SMTVKGIVLEKELRLKETLKNQGVSNAVIWCT) the chain is on the cytoplasmic side. A helical membrane pass occupies residues 700-720 (WFLDSFSIMALSIFLLTLFIM). The Extracellular segment spans residues 721-730 (HGRILHYSDP). Residues 731–751 (FILFLFLLAFATATIMQSFLL) traverse the membrane as a helical segment. Residues 752-759 (STLFSKAS) are Cytoplasmic-facing. A helical membrane pass occupies residues 760–780 (LAAACSGVIYFTLYLPHVLCF). The Extracellular portion of the chain corresponds to 781-835 (AWQDRMTADLKTTVSLLSSVAFGFGTEYLVRFEEQGLGLQWSNIGKSPLEGDEFS). The chain crosses the membrane as a helical span at residues 836 to 856 (FLLSMKMMLLDAALYGLLAWY). The Cytoplasmic segment spans residues 857 to 1375 (LDQVFPGDYG…IRSRKDFVAQ (519 aa)). Positions 891–910 (ERALEKTEPLTEEMEDPEHP) are disordered. Thr-901 bears the Phosphothreonine mark. The 232-residue stretch at 929-1160 (VCVKNLVKVF…FGTGFYLTLV (232 aa)) folds into the ABC transporter 1 domain. Residues Phe-938, Gly-966, and Lys-969 each coordinate ATP. Mg(2+) is bound at residue Thr-970. 6 residues coordinate ATP: Thr-971, Gln-1010, Lys-1054, Gly-1064, Gly-1065, and His-1118. Ser-1185 is subject to Phosphoserine. The interval 1311–1344 (RQYAQAPHTCSPGQVDPPKGQPSPEPEDPGVPFN) is disordered. A helical transmembrane segment spans residues 1376–1396 (IVLPATFVFLALMLSIIVPPF). Over 1397–1726 (GEFPALTLHP…VSPTTYWLTN (330 aa)) the chain is Extracellular. Asn-1468 carries an N-linked (GlcNAc...) asparagine glycan. Residues Asn-1528, Asn-1587, and Asn-1661 are each glycosylated (N-linked (GlcNAc...) asparagine). The helical transmembrane segment at 1727–1747 (FLWDIMNYAVSAGLVVGIFIG) threads the bilayer. At 1748–1758 (FQKKAYTSPDN) the chain is on the cytoplasmic side. The helical transmembrane segment at 1759–1779 (LPALVSLLMLYGWAVIPMMYP) threads the bilayer. Residues 1780-1791 (ASFLFEVPSTAY) lie on the Extracellular side of the membrane. A helical membrane pass occupies residues 1792–1812 (VALSCANLFIGINSSAITFVL). The Cytoplasmic portion of the chain corresponds to 1813–1830 (ELFENNRTLLRFNAMLRK). Residues 1831 to 1851 (LLIVFPHFCLGRGLIDLALSQ) form a helical membrane-spanning segment. Over 1852 to 1872 (AVTDVYAQFGEEYSANPFQWD) the chain is Extracellular. A helical transmembrane segment spans residues 1873–1893 (LIGKNLVAMAIEGVVYFLLTL). The Cytoplasmic portion of the chain corresponds to 1894 to 2310 (LIQHHFFLTR…AEDKHTRSPQ (417 aa)). An ABC transporter 2 domain is found at 1937–2169 (LKLNELTKVY…FGDGYIVTMK (233 aa)). Positions 1973, 1974, 1977, 1978, 1979, and 2072 each coordinate ATP. Thr-1978 contacts Mg(2+). Positions 2243 to 2248 (VFVNFA) are essential for ATP binding and ATPase activity. The disordered stretch occupies residues 2266 to 2310 (ASWQAKLEEKSGRLQTQEPLPAGSEQLANGSNPTAAEDKHTRSPQ). A compositionally biased stretch (basic and acidic residues) spans 2301–2310 (AEDKHTRSPQ).

This sequence belongs to the ABC transporter superfamily. ABCA family. N-glycosylated. Post-translationally, proteolytic cleavage by trypsin leads to a 120-kDa N-terminal fragment and a 115-kDa C-terminal fragment that are linked through disulfide bonds. In terms of processing, phosphorylation is independent of light exposure and modulates ATPase activity. In terms of tissue distribution, retinal-specific. Seems to be exclusively found in the rims of rod photoreceptor cells.

It is found in the membrane. The protein resides in the endoplasmic reticulum. Its subcellular location is the cell projection. The protein localises to the cilium. It localises to the photoreceptor outer segment. It catalyses the reaction an N-all-trans-retinylidenephosphatidylethanolamine(out) + ATP + H2O = an N-all-trans-retinylidenephosphatidylethanolamine(in) + ADP + phosphate + H(+). The catalysed reaction is ATP + H2O + phospholipidSide 1 = ADP + phosphate + phospholipidSide 2.. The enzyme catalyses a 1,2-diacyl-sn-glycero-3-phosphoethanolamine(out) + ATP + H2O = a 1,2-diacyl-sn-glycero-3-phosphoethanolamine(in) + ADP + phosphate + H(+). It carries out the reaction N-11-cis-retinylidenephosphatidylethanolamine(out) + ATP + H2O = N-11-cis-retinylidenephosphatidylethanolamine(in) + ADP + phosphate + H(+). It catalyses the reaction ATP + H2O = ADP + phosphate + H(+). Its activity is regulated as follows. ATPase activity is decreased by cholesterol and ceramide. Phospholipids translocase activity is highly reduced by berylium fluoride and aluminum floride. N-ethylmaleimide inhibits phospholipid translocase activity. In terms of biological role, flippase that catalyzes in an ATP-dependent manner the transport of retinal-phosphatidylethanolamine conjugates like the 11-cis and all-trans isomers of N-retinylidene-phosphatidylethanolamine from the lumen to the cytoplasmic leaflet of photoreceptor outer segment disk membranes, where N-cis-retinylidene-phosphatidylethanolamine (N-cis-R-PE) is then isomerized to its all-trans isomer (N-trans-R-PE) and reduced by RDH8 to produce all-trans-retinol (all-trans-rol) and therefore prevents the accumulation of excess of 11-cis-retinal and its schiff-base conjugate and the formation of toxic bisretinoid. Displays ATPase activity in vitro in absence of retinal substrate. May display GTPase activity that is strongly influenced by the lipid environment and the presence of retinoid compounds. Binds the unprotonated form of N-retinylidene-phosphatidylethanolamine with high affinity in the absence of ATP and ATP binding and hydrolysis induce a protein conformational change that causes the dissociation of N-retinylidene-phosphatidylethanolamine. The protein is Retinal-specific phospholipid-transporting ATPase ABCA4 of Mus musculus (Mouse).